Consider the following 279-residue polypeptide: Tetra-spanning protein 1 (279 aa).

2 consecutive transmembrane segments (helical) span residues 25 to 45 and 50 to 70; these read VWFS…LQAI and APPF…AIVL. Asn77 carries N-linked (GlcNAc...) asparagine glycosylation. Residues 100–122 form a helical membrane-spanning segment; it reads YFILALSMLIDRPILFSLAPYAI. Residue Asn143 is glycosylated (N-linked (GlcNAc...) asparagine). Residues 172 to 192 form a helical membrane-spanning segment; that stretch reads MQLVASLETFLLFRLFFGVFL. Residues 260-279 form a disordered region; the sequence is VGTAQSRPTASSSTTAPSST. Positions 262-279 are enriched in low complexity; sequence TAQSRPTASSSTTAPSST.

It belongs to the PER33/POM33 family. In terms of assembly, interacts with RTN1 and YOP1.

The protein localises to the golgi apparatus membrane. The protein resides in the endoplasmic reticulum membrane. Its subcellular location is the nucleus membrane. Functionally, required for the correct positioning of the cellular division plane by delimiting the actomyosin ring assembly at the cell equator. The protein is Tetra-spanning protein 1 (tts1) of Schizosaccharomyces pombe (strain 972 / ATCC 24843) (Fission yeast).